Here is a 218-residue protein sequence, read N- to C-terminus: MSDVIKDLSELRLSYEQGELYETQVASNPHEQFLGWFNHALAANLHEPYAMSLATASASGRPHVRTVLLRGATEAGYDFYTNYDSQKGIDLAENPYAELLFYWPSLERQVRVGGHVVKIPEQESTDYYHKRPRDSQIAAYISTPQSGKIESRELLQQRFQDLQQQVQSHEVLDKPEFWGGYRLQPDYYEFWQGRPNRLHDRLSYEKIDGQWTLHRLMP.

Residues 12 to 15 and arginine 70 contribute to the substrate site; that span reads RLSY. Residues 65–70, 80–81, lysine 87, and glutamine 109 contribute to the FMN site; these read RTVLLR and YT. The substrate site is built by tyrosine 127, arginine 131, and serine 135. FMN contacts are provided by residues 145-146 and tryptophan 191; that span reads QS. Position 197–199 (197–199) interacts with substrate; that stretch reads RLH. Arginine 201 is an FMN binding site.

Belongs to the pyridoxamine 5'-phosphate oxidase family. In terms of assembly, homodimer. It depends on FMN as a cofactor.

The enzyme catalyses pyridoxamine 5'-phosphate + O2 + H2O = pyridoxal 5'-phosphate + H2O2 + NH4(+). The catalysed reaction is pyridoxine 5'-phosphate + O2 = pyridoxal 5'-phosphate + H2O2. It functions in the pathway cofactor metabolism; pyridoxal 5'-phosphate salvage; pyridoxal 5'-phosphate from pyridoxamine 5'-phosphate: step 1/1. The protein operates within cofactor metabolism; pyridoxal 5'-phosphate salvage; pyridoxal 5'-phosphate from pyridoxine 5'-phosphate: step 1/1. In terms of biological role, catalyzes the oxidation of either pyridoxine 5'-phosphate (PNP) or pyridoxamine 5'-phosphate (PMP) into pyridoxal 5'-phosphate (PLP). This is Pyridoxine/pyridoxamine 5'-phosphate oxidase from Acinetobacter baumannii (strain SDF).